Consider the following 273-residue polypeptide: MGEKITEEREFQSISEIPEEEIDATNDEEKLADIVENEIEKEIRKSKTRKCKTIENFYYYILRDGKIYPASDYDIEVEKGKRSANDIYAFVETDVTRDFDEFLFDIDYGLPSISDILKFYLEKAGFRIANEVPTPNLKYYIHAVVEFGEDRPQYLAVNIYDIDSLARALRIPQIVEQKLGNKPRTITADEFNDIERIVAEEQPILAGYTYDEALRIPYHYYVDHNNSFKDDALKIAHAYLQLFPTPYQVCYEWKARWFNKIDCLKLERLKPSS.

The protein localises to the virion. In Acidianus convivator (ATV), this protein is Structural protein ORF273.